Consider the following 354-residue polypeptide: Protein-arginine kinase (354 aa).

Residues isoleucine 24–alanine 254 enclose the Phosphagen kinase C-terminal domain. Residues serine 27–arginine 31, histidine 92, arginine 125, arginine 176–methionine 180, and arginine 207–glutamate 212 each bind ATP. The short motif at arginine 337–alanine 342 is the RDXXRA motif of the pArg binding pocket involved in allosteric regulation element.

It belongs to the ATP:guanido phosphotransferase family.

It carries out the reaction L-arginyl-[protein] + ATP = N(omega)-phospho-L-arginyl-[protein] + ADP + H(+). Appears to be allosterically activated by the binding of pArg-containing polypeptides to the pArg-binding pocket localized in the C-terminal domain of McsB. Catalyzes the specific phosphorylation of arginine residues in a large number of proteins. Is part of the bacterial stress response system. Protein arginine phosphorylation has a physiologically important role and is involved in the regulation of many critical cellular processes, such as protein homeostasis, motility, competence, and stringent and stress responses, by regulating gene expression and protein activity. The protein is Protein-arginine kinase of Bacillus thuringiensis subsp. konkukian (strain 97-27).